A 376-amino-acid polypeptide reads, in one-letter code: Putative C-mannosyltransferase DPY19L2P2 (376 aa).

A glycan (N-linked (GlcNAc...) asparagine) is linked at N32. Transmembrane regions (helical) follow at residues 52–72 (ACFY…LFFI), 107–127 (LRES…TLIL), 154–174 (AQFI…VGYI), 182–202 (IIYM…GNSM), 233–253 (LNCW…LKFL), and 299–319 (LLIY…CFIF).

Belongs to the dpy-19 family. In terms of tissue distribution, fibroblast, lung, lymphoblast, spleen and testis.

Its subcellular location is the membrane. Functionally, probable C-mannosyltransferase that mediates C-mannosylation of tryptophan residues on target proteins. This chain is Putative C-mannosyltransferase DPY19L2P2 (DPY19L2P2), found in Homo sapiens (Human).